A 585-amino-acid polypeptide reads, in one-letter code: Pyruvate kinase (585 aa).

Residue Arg32 participates in substrate binding. The K(+) site is built by Asn34, Ser36, Asp66, and Thr67. 34-37 (NFSH) provides a ligand contact to ATP. Positions 73 and 156 each coordinate ATP. Glu221 lines the Mg(2+) pocket. 3 residues coordinate substrate: Gly244, Asp245, and Thr277. Asp245 contacts Mg(2+).

Belongs to the pyruvate kinase family. This sequence in the C-terminal section; belongs to the PEP-utilizing enzyme family. The cofactor is Mg(2+). K(+) is required as a cofactor.

It carries out the reaction pyruvate + ATP = phosphoenolpyruvate + ADP + H(+). Its pathway is carbohydrate degradation; glycolysis; pyruvate from D-glyceraldehyde 3-phosphate: step 5/5. The polypeptide is Pyruvate kinase (pyk) (Staphylococcus aureus (strain USA300)).